The sequence spans 495 residues: ESX-2 secretion system ATPase EccB2 (495 aa).

A helical transmembrane segment spans residues 43–63; the sequence is LALSMVLVAIAAGWMMLLNVL.

The protein belongs to the EccB family. In terms of assembly, part of the ESX-2 / type VII secretion system (T7SS), which is composed of cytosolic and membrane components.

It is found in the cell membrane. An ATPase. The protein is ESX-2 secretion system ATPase EccB2 (eccB2) of Mycobacterium tuberculosis (strain CDC 1551 / Oshkosh).